A 464-amino-acid chain; its full sequence is NADH-quinone oxidoreductase subunit N (464 aa).

Helical transmembrane passes span Met-5–Leu-25, Leu-31–Leu-51, Leu-63–Ser-83, Glu-96–Ser-116, Leu-117–Val-137, Leu-152–Ala-172, Gly-188–Phe-208, Val-242–Leu-262, Met-286–Leu-303, Ala-312–Ala-332, Ala-358–Met-378, Val-393–Leu-415, and Leu-436–Phe-456.

It belongs to the complex I subunit 2 family. In terms of assembly, NDH-1 is composed of 14 different subunits. Subunits NuoA, H, J, K, L, M, N constitute the membrane sector of the complex.

The protein resides in the cell inner membrane. It carries out the reaction a quinone + NADH + 5 H(+)(in) = a quinol + NAD(+) + 4 H(+)(out). Functionally, NDH-1 shuttles electrons from NADH, via FMN and iron-sulfur (Fe-S) centers, to quinones in the respiratory chain. The immediate electron acceptor for the enzyme in this species is believed to be ubiquinone. Couples the redox reaction to proton translocation (for every two electrons transferred, four hydrogen ions are translocated across the cytoplasmic membrane), and thus conserves the redox energy in a proton gradient. This is NADH-quinone oxidoreductase subunit N from Syntrophotalea carbinolica (strain DSM 2380 / NBRC 103641 / GraBd1) (Pelobacter carbinolicus).